A 168-amino-acid chain; its full sequence is Signal peptidase I V (168 aa).

At 1 to 6 the chain is on the cytoplasmic side; that stretch reads MKKRFW. The chain crosses the membrane as a helical span at residues 7–26; the sequence is FLAGVVSVVLAIQVKNAVFI. The Extracellular segment spans residues 27-168; the sequence is DYKVEGVSMN…NIVGVISDAE (142 aa). Residues S34 and K75 contribute to the active site.

This sequence belongs to the peptidase S26 family.

It is found in the cell membrane. The enzyme catalyses Cleavage of hydrophobic, N-terminal signal or leader sequences from secreted and periplasmic proteins.. The polypeptide is Signal peptidase I V (sipV) (Bacillus subtilis (strain 168)).